The following is a 641-amino-acid chain: FACT complex subunit SSRP1-A (641 aa).

A disordered region spans residues 459–561 (TDDDAVDPHL…DPNAPKRAMT (103 aa)). The span at 476-487 (GDEESDEEDEDF) shows a compositional bias: acidic residues. Basic and acidic residues predominate over residues 512–524 (GGEKEKLSKKEAS). Residues 556–624 (PKRAMTPFMY…RYEKESAVYR (69 aa)) constitute a DNA-binding region (HMG box).

Belongs to the SSRP1 family. As to quaternary structure, component of the FACT complex, a stable heterodimer of SPT16 and SSRP1.

Its subcellular location is the nucleus. It is found in the chromosome. In terms of biological role, component of the FACT complex, a general chromatin factor that acts to reorganize nucleosomes. The FACT complex is involved in multiple processes that require DNA as a template such as mRNA elongation, DNA replication and DNA repair. During transcription elongation the FACT complex acts as a histone chaperone that both destabilizes and restores nucleosomal structure. It facilitates the passage of RNA polymerase II and transcription by promoting the dissociation of one histone H2A-H2B dimer from the nucleosome, then subsequently promotes the reestablishment of the nucleosome following the passage of RNA polymerase II. Binds specifically to double-stranded DNA. The polypeptide is FACT complex subunit SSRP1-A (SSRP1-A) (Oryza sativa subsp. japonica (Rice)).